The chain runs to 559 residues: Asparagine--tRNA ligase, cytoplasmic (559 aa).

Phosphoserine is present on Ser72. The disordered stretch occupies residues 82–102 (HREQMKNDSREKKEAEDNLRR). An N6-acetyllysine modification is found at Lys255. Ser493 is modified (phosphoserine). The residue at position 501 (Lys501) is an N6-acetyllysine.

This sequence belongs to the class-II aminoacyl-tRNA synthetase family. Homodimer.

The protein resides in the cytoplasm. It carries out the reaction tRNA(Asn) + L-asparagine + ATP = L-asparaginyl-tRNA(Asn) + AMP + diphosphate + H(+). In terms of biological role, catalyzes the attachment of asparagine to tRNA(Asn) in a two-step reaction: asparagine is first activated by ATP to form Asn-AMP and then transferred to the acceptor end of tRNA(Asn). In addition to its essential role in protein synthesis, acts as a signaling molecule that induced migration of CCR3-expressing cells. Has an essential role in the development of the cerebral cortex, being required for proper proliferation of radial glial cells. The polypeptide is Asparagine--tRNA ligase, cytoplasmic (Mus musculus (Mouse)).